Here is a 403-residue protein sequence, read N- to C-terminus: Exodeoxyribonuclease 7 large subunit (403 aa).

This sequence belongs to the XseA family. Heterooligomer composed of large and small subunits.

Its subcellular location is the cytoplasm. The enzyme catalyses Exonucleolytic cleavage in either 5'- to 3'- or 3'- to 5'-direction to yield nucleoside 5'-phosphates.. In terms of biological role, bidirectionally degrades single-stranded DNA into large acid-insoluble oligonucleotides, which are then degraded further into small acid-soluble oligonucleotides. This chain is Exodeoxyribonuclease 7 large subunit, found in Streptomyces griseus subsp. griseus (strain JCM 4626 / CBS 651.72 / NBRC 13350 / KCC S-0626 / ISP 5235).